A 1997-amino-acid chain; its full sequence is Nucleoprotein TPR (1997 aa).

Coiled coils occupy residues 1-36 (QEQHSQLEAAKTQVEKDMGEKISNLERELENANDLL), 101-277 (EIVK…HQMT), 335-1103 (DSTE…IKTI), and 1129-1305 (AEAS…EPQE). 2 stretches are compositionally biased toward basic and acidic residues: residues 672–702 (SSEYQSQLEKKMMESEKEKQELRDEKHKTVE) and 1290–1305 (REQQERHHEQRDEPQE). Disordered regions lie at residues 672-706 (SSEYQSQLEKKMMESEKEKQELRDEKHKTVEQMEQ), 1290-1352 (REQQ…AAVP), 1438-1529 (AFVQ…KTET), 1561-1752 (IQTS…RRQS), 1795-1832 (AIHSPQVAGVPRFRFGPPEDMPQASSSHSDLGQLASQG), and 1870-1997 (ENPA…RSNI). Composition is skewed to polar residues over residues 1306–1321 (TTRIPQQRQITLQPTT), 1328–1347 (SANTSEPPTANIKPTPSKVT), and 1446–1487 (SHAT…SSSI). The segment covering 1511–1529 (DQQRTKKRKEEDIEEKTET) has biased composition (basic and acidic residues). The span at 1561–1587 (IQTSQVIESQAPEQLQNVQSTQDSLQD) shows a compositional bias: polar residues. Composition is skewed to acidic residues over residues 1601–1637 (SDEENEDEQEGYEEEEQEDEEEDEDDAGIGEGDDSNE) and 1644–1667 (GNEDYEGDDAEEADGTDPDTETED). Composition is skewed to polar residues over residues 1692-1709 (AESTFSQETREQPSSASD), 1817-1830 (QASSSHSDLGQLAS), and 1879-1899 (HASQSVPMVTTSTGNVPTSVD). A compositionally biased stretch (acidic residues) spans 1902-1915 (AADEGDEVFVEAES). Low complexity predominate over residues 1950–1959 (SSSIADTSSS).

The protein belongs to the TPR family. In terms of assembly, homodimer. Part of the nuclear pore complex (NPC). Interacts with nuclear receptor KPNB1; the interaction occurs in a RanGTP-dependent manner. Associates with the Importin alpha/Importin beta receptor. As to expression, expressed in epithelial cells, oocytes and egg (at protein level).

It is found in the nucleus. The protein resides in the nucleus membrane. It localises to the nucleus envelope. The protein localises to the nuclear pore complex. Its subcellular location is the cytoplasm. It is found in the cytoskeleton. The protein resides in the spindle. It localises to the chromosome. The protein localises to the centromere. Its subcellular location is the kinetochore. Component of the nuclear pore complex (NPC), a complex required for the trafficking across the nuclear envelope. Functions as a scaffolding element in the nuclear phase of the NPC essential for normal nucleocytoplasmic transport of proteins and mRNAs, plays a role in the establishment of nuclear-peripheral chromatin compartmentalization in interphase, and in the mitotic spindle checkpoint signaling during mitosis. Involved in the quality control and retention of unspliced mRNAs in the nucleus. Implicated in nuclear export of mRNAs transcribed from heat shock gene promoters. May play a limited role in the regulation of nuclear protein export. May be involved in the formation and/or maintenance of NPC-associated perinuclear heterochromatin exclusion zones (HEZs). Finally, may act as a spatial regulator of the spindle-assembly checkpoint (SAC) response. This is Nucleoprotein TPR from Xenopus laevis (African clawed frog).